A 367-amino-acid chain; its full sequence is Germination protease (367 aa).

Positions 1-13 (MEEQQIPFQVRTD) are excised as a propeptide. The segment at 267–287 (KDDPSKSLTPAGMSFGNRKLT) is disordered.

It belongs to the peptidase A25 family. Homotetramer. Autoproteolytically processed. The inactive tetrameric zymogen termed p46 autoprocesses to a smaller form termed p41, which is active only during spore germination.

The enzyme catalyses Endopeptidase action with P4 Glu or Asp, P1 preferably Glu &gt; Asp, P1' hydrophobic and P2' Ala.. Its function is as follows. Initiates the rapid degradation of small, acid-soluble proteins during spore germination. The polypeptide is Germination protease (Oceanobacillus iheyensis (strain DSM 14371 / CIP 107618 / JCM 11309 / KCTC 3954 / HTE831)).